The following is a 345-amino-acid chain: N-acetyl-gamma-glutamyl-phosphate reductase (345 aa).

Residue Cys142 is part of the active site.

Belongs to the NAGSA dehydrogenase family. Type 1 subfamily.

Its subcellular location is the cytoplasm. The catalysed reaction is N-acetyl-L-glutamate 5-semialdehyde + phosphate + NADP(+) = N-acetyl-L-glutamyl 5-phosphate + NADPH + H(+). The protein operates within amino-acid biosynthesis; L-arginine biosynthesis; N(2)-acetyl-L-ornithine from L-glutamate: step 3/4. Catalyzes the NADPH-dependent reduction of N-acetyl-5-glutamyl phosphate to yield N-acetyl-L-glutamate 5-semialdehyde. The chain is N-acetyl-gamma-glutamyl-phosphate reductase from Thermus thermophilus (strain ATCC BAA-163 / DSM 7039 / HB27).